The primary structure comprises 678 residues: ERAD-associated E3 ubiquitin-protein ligase component HRD3A (678 aa).

A signal peptide spans 1-25 (MRILSYGIVILSLLVFSFIEFGVHA). The disordered stretch occupies residues 40-71 (GGDDNGVGESSDFDEFGESEPKSEEELDPGSW). 8 Sel1-like repeats span residues 124–159 (PHAQ…AGGN), 242–277 (ANAM…VDKG), 279–313 (PRSM…AKEG), 317–349 (AFNG…AVDN), 353–386 (SGHY…ANAG), 388–422 (PKAF…AERG), 506–537 (AALL…AKSQ), and 540–568 (AQAM…RYYD). Residues Asn298 and Asn335 are each glycosylated (N-linked (GlcNAc...) asparagine). A helical transmembrane segment spans residues 620 to 640 (VVFEEGNATILTLFVCLITIL).

Belongs to the sel-1 family. Interacts with OS9.

It localises to the endoplasmic reticulum membrane. Component of the endoplasmic reticulum (ER) quality control system called ER-associated degradation (ERAD) and involved in ubiquitin-dependent degradation of misfolded endoplasmic reticulum proteins. Functions as an ERAD substrate-recruiting factor that recognizes misfolded proteins for the HRD1 E3 ubiquitin ligase complex. Targets the misfolded LRR receptor kinase BRI1. The chain is ERAD-associated E3 ubiquitin-protein ligase component HRD3A from Arabidopsis thaliana (Mouse-ear cress).